A 335-amino-acid polypeptide reads, in one-letter code: tRNA N6-adenosine threonylcarbamoyltransferase (335 aa).

Fe cation is bound by residues H110 and H114. Substrate-binding positions include 132–136 (LVSGG), D165, G178, and N271. Residue D299 participates in Fe cation binding.

This sequence belongs to the KAE1 / TsaD family. Fe(2+) serves as cofactor.

It is found in the cytoplasm. It catalyses the reaction L-threonylcarbamoyladenylate + adenosine(37) in tRNA = N(6)-L-threonylcarbamoyladenosine(37) in tRNA + AMP + H(+). Required for the formation of a threonylcarbamoyl group on adenosine at position 37 (t(6)A37) in tRNAs that read codons beginning with adenine. Is involved in the transfer of the threonylcarbamoyl moiety of threonylcarbamoyl-AMP (TC-AMP) to the N6 group of A37, together with TsaE and TsaB. TsaD likely plays a direct catalytic role in this reaction. This is tRNA N6-adenosine threonylcarbamoyltransferase from Campylobacter jejuni subsp. jejuni serotype O:23/36 (strain 81-176).